We begin with the raw amino-acid sequence, 218 residues long: uncharacterized protein (218 aa).

The protein belongs to the mimivirus L6/L7/L57 family.

This is an uncharacterized protein from Acanthamoeba polyphaga mimivirus (APMV).